The following is a 147-amino-acid chain: Cyanate hydratase (147 aa).

Active-site residues include arginine 88, glutamate 91, and serine 114.

The protein belongs to the cyanase family.

The enzyme catalyses cyanate + hydrogencarbonate + 3 H(+) = NH4(+) + 2 CO2. Its function is as follows. Catalyzes the reaction of cyanate with bicarbonate to produce ammonia and carbon dioxide. This Parasynechococcus marenigrum (strain WH8102) protein is Cyanate hydratase.